Consider the following 355-residue polypeptide: Isocitrate dehydrogenase [NAD] subunit gamma, mitochondrial (355 aa).

I1 is a transit peptide (mitochondrion). Residues T82 and N95 each coordinate citrate. 3 residues coordinate substrate: R98, R129, and D216. A Mn(2+)-binding site is contributed by D216. The ADP site is built by N274, T275, and N286.

The protein belongs to the isocitrate and isopropylmalate dehydrogenases family. In terms of assembly, heterooligomer of subunits alpha (IDH3A), beta (IDH3B), and gamma (IDH3G) in the apparent ratio of 2:1:1. The heterodimer containing one IDH3A and one IDH3B subunit and the heterodimer containing one IDH3A and one IDH3G subunit assemble into a heterotetramer (which contains two subunits of IDH3A, one of IDH3B and one of IDH3G) and further into the heterooctamer. The cofactor is Mg(2+). Requires Mn(2+) as cofactor.

The protein resides in the mitochondrion. With respect to regulation, the heterotetramer and the heterodimer composed of IDH3A and IDH3G subunits can be allosterically activated by citrate (CIT) or/and ADP, and the two activators can act independently or synergistically. The heterodimer composed of IDH3A and IDH3B subunits cannot be allosterically regulated and the allosteric regulation of the heterotetramer is through the IDH3G subunit and not the IDH3B subunit. The IDH3G subunit contains the allosteric site which consists of a CIT-binding site and an ADP-binding site, and the binding of CIT and ADP causes conformational changes at the allosteric site which are transmitted to the active site in the catalytic subunit (IDH3A) through a cascade of conformational changes at the heterodimer interface, leading to stabilization of the isocitrate-binding at the active site and thus activation of the enzyme. ATP can activate the heterotetramer and the heterodimer composed of IDH3A and IDH3G subunits at low concentrations but inhibits their activities at high concentrations, whereas ATP exhibits only inhibitory effect on the heterodimer composed of IDH3A and IDH3B subunits. Its function is as follows. Regulatory subunit which plays a role in the allosteric regulation of the enzyme catalyzing the decarboxylation of isocitrate (ICT) into alpha-ketoglutarate. The heterodimer composed of the alpha (IDH3A) and beta (IDH3B) subunits and the heterodimer composed of the alpha (IDH3A) and gamma (IDH3G) subunits, have considerable basal activity but the full activity of the heterotetramer (containing two subunits of IDH3A, one of IDH3B and one of IDH3G) requires the assembly and cooperative function of both heterodimers. This is Isocitrate dehydrogenase [NAD] subunit gamma, mitochondrial (IDH3G) from Macaca fascicularis (Crab-eating macaque).